The sequence spans 730 residues: Ribosomal RNA large subunit methyltransferase K/L (730 aa).

The region spanning 46-157 (TAYRLCVWSR…RGEAILSLDL (112 aa)) is the THUMP domain. The segment at 394-418 (GERREAQPEGTEARQQVPQASEPAR) is disordered.

It belongs to the methyltransferase superfamily. RlmKL family.

It is found in the cytoplasm. It carries out the reaction guanosine(2445) in 23S rRNA + S-adenosyl-L-methionine = N(2)-methylguanosine(2445) in 23S rRNA + S-adenosyl-L-homocysteine + H(+). It catalyses the reaction guanosine(2069) in 23S rRNA + S-adenosyl-L-methionine = N(2)-methylguanosine(2069) in 23S rRNA + S-adenosyl-L-homocysteine + H(+). Specifically methylates the guanine in position 2445 (m2G2445) and the guanine in position 2069 (m7G2069) of 23S rRNA. This Pseudomonas putida (strain ATCC 700007 / DSM 6899 / JCM 31910 / BCRC 17059 / LMG 24140 / F1) protein is Ribosomal RNA large subunit methyltransferase K/L.